A 298-amino-acid polypeptide reads, in one-letter code: Cation-efflux pump FieF (298 aa).

A helical membrane pass occupies residues 24 to 44; sequence LLIKIFAWWYTGSVSILAALV. Zn(2+) is bound by residues D45 and D49. 2 consecutive transmembrane segments (helical) span residues 80 to 100 and 112 to 132; these read SLAA…LTSI and PGVG…LVTF. Residues H151 and D155 each coordinate Zn(2+). 2 consecutive transmembrane segments (helical) span residues 154–174 and 176–196; these read SDVM…YGWH and ADAL…LRMG.

This sequence belongs to the cation diffusion facilitator (CDF) transporter (TC 2.A.4) family. FieF subfamily. Homodimer.

It is found in the cell inner membrane. It carries out the reaction Zn(2+)(in) + H(+)(out) = Zn(2+)(out) + H(+)(in). The catalysed reaction is Cd(2+)(in) + H(+)(out) = Cd(2+)(out) + H(+)(in). It catalyses the reaction Fe(2+)(in) + H(+)(out) = Fe(2+)(out) + H(+)(in). Functionally, divalent metal cation transporter which exports Zn(2+), Cd(2+) and possibly Fe(2+). May be involved in zinc and iron detoxification by efflux. This Salmonella typhi protein is Cation-efflux pump FieF.